Reading from the N-terminus, the 359-residue chain is DNA integrity scanning protein DisA (359 aa).

The region spanning 7 to 145 (DDIFRATLAA…AGRRYVLDGA (139 aa)) is the DAC domain. ATP-binding positions include Gly74, Leu92, and 105–109 (TRHRT).

Belongs to the DisA family. In terms of assembly, homooctamer. The cofactor is Mg(2+).

It carries out the reaction 2 ATP = 3',3'-c-di-AMP + 2 diphosphate. Participates in a DNA-damage check-point that is active prior to asymmetric division when DNA is damaged. DisA forms globular foci that rapidly scan along the chromosomes during sporulation, searching for lesions. When a lesion is present, DisA pauses at the lesion site. This triggers a cellular response that culminates in a temporary block in sporulation initiation. Its function is as follows. Also has diadenylate cyclase activity, catalyzing the condensation of 2 ATP molecules into cyclic di-AMP (c-di-AMP). c-di-AMP acts as a signaling molecule that couples DNA integrity with progression of sporulation. The rise in c-di-AMP level generated by DisA while scanning the chromosome, operates as a positive signal that advances sporulation; upon encountering a lesion, the DisA focus arrests at the damaged site and halts c-di-AMP synthesis. The protein is DNA integrity scanning protein DisA of Parafrankia sp. (strain EAN1pec).